Reading from the N-terminus, the 269-residue chain is Peptide deformylase 1B, chloroplastic (269 aa).

Residues 1–51 (MAARLHLRLGPRLRGFASSFAPLLAAHPRALPLSRMGSVAPLAAARARRGF) constitute a chloroplast transit peptide. Residues cysteine 168 and histidine 210 each coordinate Fe cation. Glutamate 211 is an active-site residue. Histidine 214 contributes to the Fe cation binding site.

It belongs to the polypeptide deformylase family. As to quaternary structure, homodimer. Fe(2+) is required as a cofactor. As to expression, mainly expressed in mature leaves and sheaths.

It is found in the plastid. Its subcellular location is the chloroplast stroma. The protein localises to the mitochondrion. The enzyme catalyses N-terminal N-formyl-L-methionyl-[peptide] + H2O = N-terminal L-methionyl-[peptide] + formate. With respect to regulation, inhibited by actinonin. Functionally, removes the formyl group from the N-terminal Met of newly synthesized proteins. In Oryza sativa subsp. japonica (Rice), this protein is Peptide deformylase 1B, chloroplastic (PDF1B).